We begin with the raw amino-acid sequence, 66 residues long: Alpha-conotoxin GID (66 aa).

A signal peptide spans 1–21; that stretch reads MGMRMMFTVFLLVVLAATIVS. The propeptide occupies 22–44; it reads FTSDRASDGRNVAAKAFHRIGRT. Residues 45-48 are N-terminal tail important for activity on alpha-3-beta-2/CHRNA3-CHRNB2 and alpha-4-beta-2/CHRNA4-CHRNB2 nAChR; it reads IRDE. Glutamate 48 carries the 4-carboxyglutamate modification. 2 cysteine pairs are disulfide-bonded: cysteine 49-cysteine 55 and cysteine 50-cysteine 63. Positions 51–53 are ser-Xaa-Pro motif, crucial for potent interaction with nAChR; that stretch reads SNP. Proline 60 carries the post-translational modification 4-hydroxyproline.

This sequence belongs to the conotoxin A superfamily. Gamma-carboxyglutamation of Glu-48 seems to be not important for nAChR inhibition, since synthetic peptides without this modification do not show change in inhibition of alpha-7/CHRNA7 and alpha-3-beta-2/CHRNA3-CHRNB2 nAChR and show a 2.3-fold increase in inhibition of alpha-4-beta-2/CHRNA4-CHRNB2 nAChR. In terms of processing, hydroxylation of Pro-60 seems to be important for nAChR inhibition, since synthetic peptides without this modification show a small decrease in inhibition of alpha-7/CHRNA7 and alpha-3-beta-2/CHRNA3-CHRNB2 nAChR and a very important decrease in inhibition of alpha-4-beta-2/CHRNA4-CHRNB2 nAChR. Post-translationally, an amidation of Cys-63 increases potency against alpha-7/CHRNA7 (2.6-fold) and alpha-3-beta-2/CHRNA3-CHRNB2 (2-fold) nAChR. On the other hand, the peptide has no more activity on alpha-4-beta-2/CHRNA4-CHRNB2 nAChR with an amidated Cys-63. As to expression, expressed by the venom duct.

It localises to the secreted. Alpha-conotoxins act on postsynaptic membranes, they bind to the nicotinic acetylcholine receptors (nAChR) and thus inhibit them. This toxin reversibly blocks alpha-3-beta-2/CHRNA3-CHRNB2 (IC(50)=3.1-5.1 nM), alpha-7/CHRNA7 (IC(50)=4.5-5.1 nM), and alpha-4-beta-2/CHRNA4-CHRNB2 (IC(50)=128.6-390 nM) nAChRs. This chain is Alpha-conotoxin GID, found in Conus geographus (Geography cone).